A 265-amino-acid chain; its full sequence is Short-chain dehydrogenase/reductase GME11373 (265 aa).

Positions 26, 72, 99, and 132 each coordinate NADP(+). Catalysis depends on proton donor residues S148 and S149. NADP(+) contacts are provided by Y163, K167, and T198. The active-site Proton acceptor is Y163. K167 functions as the Lowers pKa of active site Tyr in the catalytic mechanism.

Belongs to the short-chain dehydrogenases/reductases (SDR) family.

Its pathway is secondary metabolite biosynthesis. In terms of biological role, short-chain dehydrogenase/reductase; part of the gene cluster that mediates the biosynthesis of dibenzodioxocinones such as pestalotiollide B, a novel class of inhibitors against cholesterol ester transfer protein (CEPT). The biosynthesis initiates from condensation of acetate and malonate units catalyzed by the non-reducing PKS pks8/GME11356. Pks8/GME11356 lacks a thioesterase (TE) domain, which is important to the cyclizing of the third ring of atrochrysone carboxylic acid, and the esterase GME11355 might play the role of TE and catalyzes the cyclization reaction of the C ring. The lactamase-like protein GME11357 (or other beta-lactamases in Pestalotiopsis microspora) probably hydrolyzes the thioester bond between the ACP of pks8/GME11356 and the intermediate to release atrochrysone carboxylic acid, which is spontaneously dehydrates to form endocrocin anthrone. Endocrocin anthrone is further converted to emodin via the endocrocin intermediate. Emodin is then oxidized by several enzymes such as the Baeyer-Villiger oxidase GME11358, the oxidoreductase GME11367, the short chain dehydrogenase/reductase GME11373, as well as by other oxidoreductases from the cluster, to modify the A and C rings and open the B ring, and finally yield monodictyphenone. The prenyltransferase GME11375 may catalyze the addition reaction between the C5 side chains and the carbon bone of dibenzodioxocinones. The remaining biochemical reactions to the final product dibenzodioxocinones should be methylation catalyzed by methyltransferase GME11366 and reduction and lactonization reaction catalyzed by a series of oxidordeuctases. The protein is Short-chain dehydrogenase/reductase GME11373 of Pestalotiopsis microspora.